Reading from the N-terminus, the 282-residue chain is MSDRLAVLPQYLIPKQALTVLAGKLASAKAGGLTTSVIRWFVRRYNVNMTEAANPDIASYKSFNEFFTRPLKDGARPAADADFLCPVDGAISQYGTIDRDQIFQAKGHSYSTTALVGGDRKLAEQFENGSFATLYLSPRDYHRIHMPCDGKLTRMIYVPGALFSVNPTTARGVPGLFARNERVICVFESEFGSFVLTLVGATIVGSMATVWHGTINPPRPGVIREWRYDEQNIRLKKGQEMGRFLLGSTVVMLFPKNTLAFNPDWSPSRAIRMGEQMGSNAN.

Catalysis depends on charge relay system; for autoendoproteolytic cleavage activity residues Asp88, His145, and Ser248. Catalysis depends on Ser248, which acts as the Schiff-base intermediate with substrate; via pyruvic acid; for decarboxylase activity. Residue Ser248 is modified to Pyruvic acid (Ser); by autocatalysis.

It belongs to the phosphatidylserine decarboxylase family. PSD-B subfamily. Prokaryotic type I sub-subfamily. Heterodimer of a large membrane-associated beta subunit and a small pyruvoyl-containing alpha subunit. The cofactor is pyruvate. In terms of processing, is synthesized initially as an inactive proenzyme. Formation of the active enzyme involves a self-maturation process in which the active site pyruvoyl group is generated from an internal serine residue via an autocatalytic post-translational modification. Two non-identical subunits are generated from the proenzyme in this reaction, and the pyruvate is formed at the N-terminus of the alpha chain, which is derived from the carboxyl end of the proenzyme. The autoendoproteolytic cleavage occurs by a canonical serine protease mechanism, in which the side chain hydroxyl group of the serine supplies its oxygen atom to form the C-terminus of the beta chain, while the remainder of the serine residue undergoes an oxidative deamination to produce ammonia and the pyruvoyl prosthetic group on the alpha chain. During this reaction, the Ser that is part of the protease active site of the proenzyme becomes the pyruvoyl prosthetic group, which constitutes an essential element of the active site of the mature decarboxylase.

The protein localises to the cell membrane. It catalyses the reaction a 1,2-diacyl-sn-glycero-3-phospho-L-serine + H(+) = a 1,2-diacyl-sn-glycero-3-phosphoethanolamine + CO2. It participates in phospholipid metabolism; phosphatidylethanolamine biosynthesis; phosphatidylethanolamine from CDP-diacylglycerol: step 2/2. Functionally, catalyzes the formation of phosphatidylethanolamine (PtdEtn) from phosphatidylserine (PtdSer). The protein is Phosphatidylserine decarboxylase proenzyme of Dechloromonas aromatica (strain RCB).